A 203-amino-acid chain; its full sequence is Dephospho-CoA kinase (203 aa).

The 200-residue stretch at K3 to N202 folds into the DPCK domain. G11–T16 contributes to the ATP binding site.

This sequence belongs to the CoaE family.

Its subcellular location is the cytoplasm. It carries out the reaction 3'-dephospho-CoA + ATP = ADP + CoA + H(+). Its pathway is cofactor biosynthesis; coenzyme A biosynthesis; CoA from (R)-pantothenate: step 5/5. Catalyzes the phosphorylation of the 3'-hydroxyl group of dephosphocoenzyme A to form coenzyme A. The protein is Dephospho-CoA kinase of Rhizobium etli (strain ATCC 51251 / DSM 11541 / JCM 21823 / NBRC 15573 / CFN 42).